A 289-amino-acid chain; its full sequence is Probable 2-keto-3-deoxyxylonate dehydratase (289 aa).

Residues Glu144, Glu146, and Asp164 each coordinate Mg(2+).

Belongs to the FAH family.

The catalysed reaction is 2-dehydro-3-deoxy-D-arabinonate = 2,5-dioxopentanoate + H2O. The protein operates within carbohydrate metabolism; D-xylose degradation. Functionally, probable 2-keto-3-deoxyxylonate dehydratase involved in the degradation of D-xylose, a major component of hemicelluloses such as xylan. Catalyzes the fourth reaction in the xylose utilization pathway through dehydratation of 2-dehydro-3-deoxy-D-xylonate into alpha-ketoglutarate semialdehyde (2,5-dioxopentanoate). This Haloferax volcanii (strain ATCC 29605 / DSM 3757 / JCM 8879 / NBRC 14742 / NCIMB 2012 / VKM B-1768 / DS2) (Halobacterium volcanii) protein is Probable 2-keto-3-deoxyxylonate dehydratase.